The chain runs to 242 residues: MRFFHFYTPEQVPSSGIPECAVAIDVLRATTTIATALAAGAEAVQVFAHLQQLQEASQNWPASQRLLAGERGGKAVAGFDLGNSPLDYTPDRVRDKRIFLSTTNGTRSLQRLEGIPVVITAALVNLGAVVDFLRRGSFAEVWLVGSGWEGAFSLEDTACAGAILHRLGCSLNQLGNDETLAALALYQTWQDDLLGLLRRSSHGQRLLGLGPENDQDLAYCADLDRLSVVPRQVQPGVLASGG.

This sequence belongs to the ComB family. The cofactor is Mg(2+).

It catalyses the reaction (2R)-O-phospho-3-sulfolactate + H2O = (2R)-3-sulfolactate + phosphate. This chain is Probable 2-phosphosulfolactate phosphatase, found in Synechococcus sp. (strain JA-2-3B'a(2-13)) (Cyanobacteria bacterium Yellowstone B-Prime).